Reading from the N-terminus, the 567-residue chain is Urease subunit alpha (567 aa).

In terms of domain architecture, Urease spans 129-567 (GGIDTHIHFI…LPMAQRYFLF (439 aa)). 3 residues coordinate Ni(2+): H134, H136, and K217. N6-carboxylysine is present on K217. Residue H219 coordinates substrate. Residues H246 and H272 each contribute to the Ni(2+) site. H320 (proton donor) is an active-site residue. D360 is a binding site for Ni(2+).

This sequence belongs to the metallo-dependent hydrolases superfamily. Urease alpha subunit family. As to quaternary structure, probable heterotrimer of UreA (gamma), UreB (beta) and UreC (alpha) subunits. Three heterotrimers associate to form the active enzyme. The trimeric urease interacts with an accessory complex composed of UreD, UreF and UreG, which is required for the assembly of the nickel containing metallocenter of UreC. The UreE protein may also play a direct role in nickel transfer to the urease apoprotein. The cofactor is Ni cation. In terms of processing, carboxylation allows a single lysine to coordinate two nickel ions.

It is found in the cytoplasm. The enzyme catalyses urea + 2 H2O + H(+) = hydrogencarbonate + 2 NH4(+). Its pathway is nitrogen metabolism; urea degradation; CO(2) and NH(3) from urea (urease route): step 1/1. In Proteus mirabilis (strain HI4320), this protein is Urease subunit alpha.